The sequence spans 375 residues: Chaperone protein DnaJ (375 aa).

The region spanning aspartate 5–glycine 70 is the J domain. The CR-type zinc-finger motif lies at glycine 134–glutamine 212. Cysteine 147, cysteine 150, cysteine 164, cysteine 167, cysteine 186, cysteine 189, cysteine 200, and cysteine 203 together coordinate Zn(2+). CXXCXGXG motif repeat units lie at residues cysteine 147–glycine 154, cysteine 164–glycine 171, cysteine 186–glycine 193, and cysteine 200–glycine 207.

It belongs to the DnaJ family. In terms of assembly, homodimer. Requires Zn(2+) as cofactor.

The protein resides in the cytoplasm. Its function is as follows. Participates actively in the response to hyperosmotic and heat shock by preventing the aggregation of stress-denatured proteins and by disaggregating proteins, also in an autonomous, DnaK-independent fashion. Unfolded proteins bind initially to DnaJ; upon interaction with the DnaJ-bound protein, DnaK hydrolyzes its bound ATP, resulting in the formation of a stable complex. GrpE releases ADP from DnaK; ATP binding to DnaK triggers the release of the substrate protein, thus completing the reaction cycle. Several rounds of ATP-dependent interactions between DnaJ, DnaK and GrpE are required for fully efficient folding. Also involved, together with DnaK and GrpE, in the DNA replication of plasmids through activation of initiation proteins. The protein is Chaperone protein DnaJ of Azoarcus sp. (strain BH72).